An 824-amino-acid polypeptide reads, in one-letter code: Spindle-defective protein 2 (824 aa).

Acidic residues-rich tracts occupy residues 16–27 and 35–44; these read EIEDSPIDDNDN and GDVELEEEEV. The segment at 16–98 is disordered; the sequence is EIEDSPIDDN…SRPASVMSDK (83 aa). Over residues 59 to 70 the composition is skewed to polar residues; that stretch reads TNMTNPKVNDLT. Positions 81 to 98 are enriched in low complexity; sequence SAASSRSASRPASVMSDK. Residues 111–131 adopt a coiled-coil conformation; it reads ENAIEEYTNQVFADENKADLL. The tract at residues 189–252 is disordered; it reads RAKPGANDNE…GQYQGPNFDL (64 aa). Polar residues predominate over residues 207 to 225; it reads NVPTTSDKSAFITSPMNST. Residues 304 to 324 are a coiled coil; sequence NNKNQDLFAALEEARKRRAAQ. 2 disordered regions span residues 342–372 and 433–455; these read KPTS…LTTS and NNGN…VRTM. The span at 349-366 shows a compositional bias: low complexity; that stretch reads SGNVVSSTSNDNTTAASS.

In terms of assembly, interacts with sas-7 (via C-terminus); may be recruited to centrioles by sas-7.

It localises to the cytoplasm. It is found in the cytoskeleton. Its subcellular location is the microtubule organizing center. The protein resides in the centrosome. The protein localises to the centriole. Its function is as follows. Required both for centrosome duplication and maturation. Required for pericentriolar material (PCM) recruitment. The protein is Spindle-defective protein 2 of Caenorhabditis elegans.